Here is a 154-residue protein sequence, read N- to C-terminus: Protein X (154 aa).

The tract at residues 68 to 117 is mitochondrial targeting sequence; that stretch reads PCALRFTSARSMETTVNAHQVLPKVLHKRTLGLSAMSTTDLEAYFKDCLF.

Belongs to the orthohepadnavirus protein X family. In terms of assembly, may form homodimer. May interact with host CEBPA, CFLAR, CREB1, DDB1, E4F1, HBXIP, HSPD1/HSP60, NFKBIA, POLR2E and SMAD4. Interacts with host SMC5-SMC6 complex and induces its degradation. Interacts with host TRPC4AP; leading to prevent ubiquitination of TRPC4AP. Interacts with host PLSCR1; this interaction promotes ubiquitination and degradation of HBx and impairs HBx-mediated cell proliferation. A fraction may be phosphorylated in insect cells and HepG2 cells, a human hepatoblastoma cell line. Phosphorylated in vitro by host protein kinase C or mitogen-activated protein kinase. N-acetylated in insect cells.

The protein resides in the host cytoplasm. Its subcellular location is the host nucleus. It is found in the host mitochondrion. Its function is as follows. Multifunctional protein that plays a role in silencing host antiviral defenses and promoting viral transcription. Does not seem to be essential for HBV infection. May be directly involved in development of cirrhosis and liver cancer (hepatocellular carcinoma). Most of cytosolic activities involve modulation of cytosolic calcium. The effect on apoptosis is controversial depending on the cell types in which the studies have been conducted. May induce apoptosis by localizing in mitochondria and causing loss of mitochondrial membrane potential. May also modulate apoptosis by binding host CFLAR, a key regulator of the death-inducing signaling complex (DISC). Promotes viral transcription by using the host E3 ubiquitin ligase DDB1 to target the SMC5-SMC6 complex to proteasomal degradation. This host complex would otherwise bind to viral episomal DNA, and prevents its transcription. Moderately stimulates transcription of many different viral and cellular transcription elements. Promoters and enhancers stimulated by HBx contain DNA binding sites for NF-kappa-B, AP-1, AP-2, c-EBP, ATF/CREB, or the calcium-activated factor NF-AT. The polypeptide is Protein X (Homo sapiens (Human)).